The following is a 183-amino-acid chain: Capsid protein (183 aa).

The tract at residues 136–183 (NAPILSTLPETTVVRRRGRSPRRRTPSPRRRRSQSPRRRRSQSRESQC) is disordered. Positions 149–176 (VRRRGRSPRRRTPSPRRRRSQSPRRRRS) are enriched in basic residues. A phosphoserine; by host mark is found at S155, S162, and S170. Residues 155–161 (SPRRRTP) form a 1; half-length repeat. The tract at residues 155–177 (SPRRRTPSPRRRRSQSPRRRRSQ) is 3 X 8 AA repeats of S-P-R-R-R-[PR]-S-Q. The short motif at 158 to 175 (RRTPSPRRRRSQSPRRRR) is the Bipartite nuclear localization signal element. A run of 2 repeats spans residues 162 to 169 (SPRRRRSQ) and 170 to 177 (SPRRRRSQ). The segment at 177–183 (QSRESQC) is RNA binding.

Belongs to the orthohepadnavirus core antigen family. Homodimerizes, then multimerizes. Interacts with cytosol exposed regions of viral L glycoprotein present in the reticulum-to-Golgi compartment. Interacts with human FLNB. Phosphorylated form interacts with host importin alpha; this interaction depends on the exposure of the NLS, which itself depends upon genome maturation and/or phosphorylation of the capsid protein. Interacts with host NUP153. Post-translationally, phosphorylated by host SRPK1, SRPK2, and maybe protein kinase C or GAPDH. Phosphorylation is critical for pregenomic RNA packaging. Protein kinase C phosphorylation is stimulated by HBx protein and may play a role in transport of the viral genome to the nucleus at the late step during the viral replication cycle.

It localises to the virion. The protein localises to the host cytoplasm. Self assembles to form an icosahedral capsid. Most capsids appear to be large particles with an icosahedral symmetry of T=4 and consist of 240 copies of capsid protein, though a fraction forms smaller T=3 particles consisting of 180 capsid proteins. Entering capsids are transported along microtubules to the nucleus. Phosphorylation of the capsid is thought to induce exposure of nuclear localization signal in the C-terminal portion of the capsid protein that allows binding to the nuclear pore complex via the importin (karyopherin-) alpha and beta. Capsids are imported in intact form through the nuclear pore into the nuclear basket, where it probably binds NUP153. Only capsids that contain the mature viral genome can release the viral DNA and capsid protein into the nucleoplasm. Immature capsids get stuck in the basket. Capsids encapsulate the pre-genomic RNA and the P protein. Pre-genomic RNA is reverse-transcribed into DNA while the capsid is still in the cytoplasm. The capsid can then either be directed to the nucleus, providing more genomes for transcription, or bud through the endoplasmic reticulum to provide new virions. This is Capsid protein from Homo sapiens (Human).